The primary structure comprises 1024 residues: NLR family CARD domain-containing protein 4 (1024 aa).

Positions 1–88 (MNFIRNNRRA…FVYQDLTGQN (88 aa)) constitute a CARD domain. A nucleotide-binding domain (NBD) region spans residues 95–298 (EEDLNVLAQN…HVGALTAEVG (204 aa)). ATP is bound by residues Thr135, 172–177 (GKGKST), and His443. The NACHT domain occupies 163–476 (SPCLIEGESG…VSKGNSYLNK (314 aa)). The winged-helix domain (WHD) stretch occupies residues 356–463 (AHTQTMLFQT…RLSSLLTSKE (108 aa)). Ser533 is modified (phosphoserine). 12 LRR repeats span residues 578–598 (FFQG…LFDF), 656–679 (KQEF…DIKY), 735–758 (VTGL…LIDS), 762–785 (LKNL…NLAE), 787–812 (LRSL…DYIV), 824–847 (EMKL…LHNL), 848–870 (IKLS…ALQE), 878–902 (LGEL…LLKQ), 911–933 (KLGL…FLEM), 936–963 (LRDL…VFEN), 965–985 (KQLV…ALVR), and 999–1021 (EVKL…TFKL).

As to quaternary structure, homooligomer; homooligomerizes following activation of Naip proteins by pathogenic proteins such as S.typhimurium (Salmonella) flagellin or PrgJ. Component of the NLRC4 inflammasome, at least composed of NLRC4, caspase-1 (CASP1) and some NAIP protein (Naip, Naip2 or Naip5). Interacts with Naip5 and Naip6; following Naip5 and Naip6 engagement by Salmonella flagellin. Interacts with Naip2; following Naip2 engagement by Salmonella PrgJ. The inflammasome is a huge complex that contains multiple copies of NLRC4 and a single Naip protein chain. Some NLRC4 inflammasomes contain PYCARD/ASC, while some others directly contact and activate CASP1. Interacts with EIF2AK2/PKR. Post-translationally, phosphorylated at Ser-533 following infection of macrophages with S.typhimurium (Salmonella). Phosphorylation is essential for NLRC4 inflammasome function to promote caspase-1 activation and pyroptosis. PRKCD phosphorylates Ser-533 in vitro. Expressed by intestinal mononuclear phagocytes.

It localises to the cytoplasm. It is found in the cytosol. Its subcellular location is the inflammasome. Key component of inflammasomes that indirectly senses specific proteins from pathogenic bacteria and fungi and responds by assembling an inflammasome complex that promotes caspase-1 activation, cytokine production and macrophage pyroptosis. The NLRC4 inflammasome is activated as part of the innate immune response to a range of intracellular bacteria. It senses pathogenic proteins of the type III secretion system (T3SS) and type IV secretion system (T4SS) such as flagellin and PrgJ-like rod proteins via the Naip proteins (Naip1, Naip2 or Naip5): specific Naip proteins recognize and bind pathogenic proteins, driving assembly and activation of the NLRC4 inflammasome. The NLRC4 inflammasome senses Gram-negative bacteria such as L.pneumophila and P.aeruginosa, enteric pathogens S.typhimurium (Salmonella) and S.flexneri and fungal pathogen C.albicans. In intestine, the NLRC4 inflammasome is able to discriminate between commensal and pathogenic bacteria and specifically drives production of interleukin-1 beta (IL1B) in response to infection by Salmonella or P.aeruginosa. In case of L.pneumophila infection the inflammasome acts by activating caspase-7. This Mus musculus (Mouse) protein is NLR family CARD domain-containing protein 4 (Nlrc4).